The chain runs to 147 residues: Phospholipase A2 inhibitor subunit A (147 aa).

The 82-residue stretch at 62 to 143 (EICEEAGGHI…DENLLVVCEF (82 aa)) folds into the C-type lectin domain. Intrachain disulfides connect cysteine 64-cysteine 141 and cysteine 119-cysteine 133. Asparagine 103 is a glycosylation site (N-linked (GlcNAc...) asparagine).

The protein belongs to the alpha-type phospholipase A2 inhibitor family. As to quaternary structure, homo- or heterotrimer; homotrimer of PLI-A chains, two PLI-A and one PLI-B chains, one PLI-A and two PLI-B chains, and homotrimer of PLI-B chains (with a ratio of 1:3:3:1). As to expression, expressed by the liver.

Its subcellular location is the secreted. PLI binds directly phospholipase A2 in the presence or absence of calcium. Inhibitory activity of the PLI-A homotrimer is more specific than that of the PLI-B homotrimer. This Protobothrops flavoviridis (Habu) protein is Phospholipase A2 inhibitor subunit A.